Consider the following 307-residue polypeptide: OTU domain-containing protein 2 (307 aa).

Disordered stretches follow at residues 23–46 (ENKD…RKEV) and 96–130 (SRDE…AKRD). The span at 103 to 114 (QNVPVQQQQQGQ) shows a compositional bias: low complexity. In terms of domain architecture, OTU spans 167–307 (LKQFDIQPDG…GEHYNSLHDS (141 aa)).

This chain is OTU domain-containing protein 2 (OTU2), found in Saccharomyces cerevisiae (strain ATCC 204508 / S288c) (Baker's yeast).